Consider the following 242-residue polypeptide: 2-C-methyl-D-erythritol 4-phosphate cytidylyltransferase (242 aa).

Belongs to the IspD/TarI cytidylyltransferase family. IspD subfamily.

It catalyses the reaction 2-C-methyl-D-erythritol 4-phosphate + CTP + H(+) = 4-CDP-2-C-methyl-D-erythritol + diphosphate. It functions in the pathway isoprenoid biosynthesis; isopentenyl diphosphate biosynthesis via DXP pathway; isopentenyl diphosphate from 1-deoxy-D-xylulose 5-phosphate: step 2/6. In terms of biological role, catalyzes the formation of 4-diphosphocytidyl-2-C-methyl-D-erythritol from CTP and 2-C-methyl-D-erythritol 4-phosphate (MEP). The polypeptide is 2-C-methyl-D-erythritol 4-phosphate cytidylyltransferase (Vesicomyosocius okutanii subsp. Calyptogena okutanii (strain HA)).